We begin with the raw amino-acid sequence, 128 residues long: Small ribosomal subunit protein bS6 (128 aa).

It belongs to the bacterial ribosomal protein bS6 family.

In terms of biological role, binds together with bS18 to 16S ribosomal RNA. The chain is Small ribosomal subunit protein bS6 from Thermotoga sp. (strain RQ2).